We begin with the raw amino-acid sequence, 142 residues long: Large ribosomal subunit protein uL13 (142 aa).

This sequence belongs to the universal ribosomal protein uL13 family. As to quaternary structure, part of the 50S ribosomal subunit.

In terms of biological role, this protein is one of the early assembly proteins of the 50S ribosomal subunit, although it is not seen to bind rRNA by itself. It is important during the early stages of 50S assembly. This is Large ribosomal subunit protein uL13 from Azoarcus sp. (strain BH72).